The primary structure comprises 1456 residues: Sterol 3-beta-glucosyltransferase (1456 aa).

The span at 1–12 shows a compositional bias: basic and acidic residues; it reads MASQDRGSDRTS. The disordered stretch occupies residues 1-229; that stretch reads MASQDRGSDR…RSPAAAATGE (229 aa). Residues 13-22 are compositionally biased toward basic residues; that stretch reads RRLTKKRKDG. Residues 23–48 show a composition bias toward basic and acidic residues; it reads KKPMRDVSLDMPERFKDGDDAHEDVT. 2 stretches are compositionally biased toward polar residues: residues 54 to 63 and 109 to 123; these read HTMSMNQSIF and RLST…SGQT. The GRAM 1 domain occupies 236–283; it reads KRIQHIFEFAQEEEVISEYPCWLLQSILLQGYMYITQKHICFYAYIPK. Positions 287–384 constitute a PH domain; it reads DVSKTGYLSK…WVKSIQKVIF (98 aa). Disordered regions lie at residues 500–612 and 631–691; these read LSPL…TASA and NAFS…TRLS. Low complexity predominate over residues 510 to 523; the sequence is RSSMSDISVRSSVD. Composition is skewed to basic and acidic residues over residues 524–536, 544–557, and 571–584; these read ANRK…RSMD, WSLE…EAHR, and RVGD…RATD. Composition is skewed to polar residues over residues 585–612 and 631–650; these read SDSA…TASA and NAFS…TRSS. The region spanning 774 to 840 is the GRAM 2 domain; sequence DNFREHFAFR…KDIENVNKEK (67 aa). UDP-alpha-D-glucose is bound by residues S966, R967, D969, A1269, H1271, H1284, S1287, G1288, T1289, D1308, and Q1309.

The protein belongs to the glycosyltransferase 28 family.

The protein localises to the cytoplasm. It is found in the preautophagosomal structure membrane. It catalyses the reaction a sterol + UDP-alpha-D-glucose = a sterol 3-beta-D-glucoside + UDP + H(+). The enzyme catalyses ergosterol + UDP-alpha-D-glucose = ergosteryl 3-beta-D-glucoside + UDP + H(+). Sterol glycosyltransferase responsible for the glycosylation of ergosterol to form ergosterol-glucoside. The polypeptide is Sterol 3-beta-glucosyltransferase (Leptosphaeria maculans (Blackleg fungus)).